Reading from the N-terminus, the 287-residue chain is UPF0725 protein At1g19060 (287 aa).

Belongs to the UPF0725 (EMB2204) family.

This is UPF0725 protein At1g19060 from Arabidopsis thaliana (Mouse-ear cress).